A 1212-amino-acid chain; its full sequence is Filamin-A-interacting protein 1 (1212 aa).

The segment covering 1 to 15 has biased composition (polar residues); the sequence is MRSRNQGGESSSNGH. The disordered stretch occupies residues 1–73; sequence MRSRNQGGES…SEKKTKKSVE (73 aa). Composition is skewed to basic and acidic residues over residues 32-47 and 60-73; these read PSEDAKKNKANRKEED and PSGESEKKTKKSVE. The residue at position 137 (Ser137) is a Phosphoserine. 2 coiled-coil regions span residues 191 to 575 and 623 to 777; these read DYMN…DELM and PEDN…ELEL. Disordered regions lie at residues 871–898 and 948–975; these read WMRKRENGPSTPQEKGPRPNQGAGHPGE and KPRITIIPSPNVMSQKPKSADPTLGPER. The residue at position 978 (Ser978) is a Phosphoserine. A disordered region spans residues 1102–1190; sequence VSTGTVLRSP…TKFQPRAETQ (89 aa). Residues 1124–1138 show a composition bias toward low complexity; sequence VTSTITITPVTTSST. Polar residues predominate over residues 1139-1155; that stretch reads RGTQSVSGQDGSSQRPT.

It belongs to the FILIP1 family. Interacts with FLNA. Interacts with RHOD (in GTP-bound form). In terms of tissue distribution, expressed in muscle tissue, including heart. Found in cortical ventricular zone.

The protein resides in the cytoplasm. It is found in the cytoskeleton. It localises to the stress fiber. In terms of biological role, by acting through a filamin-A/F-actin axis, it controls the start of neocortical cell migration from the ventricular zone. May be able to induce the degradation of Filamin A. This Rattus norvegicus (Rat) protein is Filamin-A-interacting protein 1 (Filip1).